The primary structure comprises 301 residues: Rhodopsin (301 aa).

At 1-18 (LHMIHLHWYQYPPMNPMM) the chain is on the extracellular side. A helical membrane pass occupies residues 19–43 (YPLLLVFMLITGILCLAGNFVTIWV). At 44–55 (FMNTKSLRTPAN) the chain is on the cytoplasmic side. The chain crosses the membrane as a helical span at residues 56-78 (LLVVNLAMSDFLMMFTMFPPMMI). Topologically, residues 79–92 (TCYYHTWTLGATFC) are extracellular. Cys-92 and Cys-169 are disulfide-bonded. A helical transmembrane segment spans residues 93–115 (EVYAFLGNLCGCASIWTMVFITF). The short motif at 116–118 (DRY) is the 'Ionic lock' involved in activated form stabilization element. Residues 116 to 134 (DRYNVIVKGVAGEPLSTKK) are Cytoplasmic-facing. The chain crosses the membrane as a helical span at residues 135-155 (ASLWILTVWVLSFTWCVAPFF). Over 156–182 (GWNRYVPEGNLTGCGTDYLSEDILSRS) the chain is Extracellular. A glycan (N-linked (GlcNAc...) asparagine) is linked at Asn-165. The helical transmembrane segment at 183 to 204 (YLYIYSTWVYFLPLAITIYCYV) threads the bilayer. The Cytoplasmic portion of the chain corresponds to 205–245 (FIIKAVAAHEKGMRDQAKKMGIKSLRNEEAQKTSAECRLAK). A helical transmembrane segment spans residues 246-267 (IAMTTVALWFIAWTPYLLINWV). The Extracellular portion of the chain corresponds to 268 to 278 (GMFARSYLSPV). The chain crosses the membrane as a helical span at residues 279–300 (YTIWGYVFAKANAVYNPIVYAI). N6-(retinylidene)lysine is present on Lys-288.

Belongs to the G-protein coupled receptor 1 family. Opsin subfamily. In terms of assembly, homodimer. Interacts with GNAQ. Contains one covalently linked retinal chromophore.

It is found in the cell projection. It localises to the rhabdomere membrane. Functionally, photoreceptor required for image-forming vision at low light intensity. Can use both retinal and 3-dehydroretinal as visual pigment. Light-induced isomerization of 11-cis to all-trans retinal triggers a conformational change that activates signaling via G-proteins. Signaling via GNAQ probably mediates the activation of phospholipase C. This Lacunicambarus ludovicianus (Painted devil crayfish) protein is Rhodopsin (RHO).